The chain runs to 223 residues: ATP phosphoribosyltransferase (223 aa).

It belongs to the ATP phosphoribosyltransferase family. Short subfamily. Heteromultimer composed of HisG and HisZ subunits.

The protein localises to the cytoplasm. It catalyses the reaction 1-(5-phospho-beta-D-ribosyl)-ATP + diphosphate = 5-phospho-alpha-D-ribose 1-diphosphate + ATP. Its pathway is amino-acid biosynthesis; L-histidine biosynthesis; L-histidine from 5-phospho-alpha-D-ribose 1-diphosphate: step 1/9. In terms of biological role, catalyzes the condensation of ATP and 5-phosphoribose 1-diphosphate to form N'-(5'-phosphoribosyl)-ATP (PR-ATP). Has a crucial role in the pathway because the rate of histidine biosynthesis seems to be controlled primarily by regulation of HisG enzymatic activity. The chain is ATP phosphoribosyltransferase from Bordetella pertussis (strain Tohama I / ATCC BAA-589 / NCTC 13251).